The primary structure comprises 60 residues: Cytotoxin 8 (60 aa).

Cystine bridges form between Cys-3–Cys-21, Cys-14–Cys-38, Cys-42–Cys-53, and Cys-54–Cys-59.

Belongs to the three-finger toxin family. Short-chain subfamily. Type IA cytotoxin sub-subfamily. In terms of assembly, monomer in solution; Homodimer and oligomer in the presence of negatively charged lipids forming a pore with a size ranging between 20 and 30 Angstroms. Expressed by the venom gland.

Its subcellular location is the secreted. The protein localises to the target cell membrane. Its function is as follows. Shows cytolytic activity on many different cells by forming pore in lipid membranes. In vivo, increases heart rate or kills the animal by cardiac arrest. In addition, it binds to heparin with high affinity, interacts with Kv channel-interacting protein 1 (KCNIP1) in a calcium-independent manner, and binds to integrin alpha-V/beta-3 (ITGAV/ITGB3) with moderate affinity. Has hemolytic activity towards human erythrocytes (EC(50)=0.074 uM) and cytolytic activity towards various cell lines. The polypeptide is Cytotoxin 8 (Naja naja (Indian cobra)).